The following is a 327-amino-acid chain: 2-oxoglutarate-dependent dioxygenase traH (327 aa).

Residues 183 to 290 (TTDAAMFLKL…YAVPAFWHGD (108 aa)) form the Fe2OG dioxygenase domain. Positions 211, 213, and 270 each coordinate Fe cation. Arginine 280 provides a ligand contact to 2-oxoglutarate.

Belongs to the iron/ascorbate-dependent oxidoreductase family. The cofactor is Fe(2+).

It participates in secondary metabolite biosynthesis. 2-oxoglutarate-dependent dioxygenase; part of the tra gene cluster that produces terrestric acid. The clavatol biosynthesis cluster cla and the terrestric acid cluster tra are both involved in the production of peniphenones and penilactones. The non-reducing PKS claF is responsible for the formation of clavatol from successive condensations of 3 malonyl-CoA units, presumably with a simple acetyl-CoA starter unit, and 2 methylation steps. The esterase claE probably collaborates with claF by catalyzing the hydrolysis of ACP-bound acyl intermediates to free the ACP from stalled intermediates. The clavatol oxidase claD then converts clavatol to hydroxyclavatol. Spontaneous dehydration of hydroxyclavatol leads to the accumulation of the highly active ortho-quinone methide. On the other hand, the PKS-NRPS hybrid traA is involved in the formation of crustosic acid, with the help of traB and traD. The polyketide synthase module (PKS) of traA is responsible for the synthesis of the polyketide backbone via the condensation of an acetyl-CoA starter unit with 3 malonyl-CoA units. The downstream nonribosomal peptide synthetase (NRPS) module then amidates the carboxyl end of the polyketide with L-malic acid. Because traA lacks a designated enoylreductase (ER) domain, the required activity is provided the enoyl reductase traG. Crustosic acid undergoes decarboxylation and isomerization to the terrestric acid, catalyzed by the 2-oxoglutarate-dependent dioxygenase traH. Both acids are further converted to the 2 gamma-butyrolactones (R)-5-methyltetronic acid and (S)-5-carboxylmethyltetronic acid, with involvement of the cytochrome P450 monooxygenase claJ. Spontaneous addition of the methide to these gamma-butyrolactones leads to peniphenone D and penilactone D, which undergo again stereospecific attacking by methide to give penilactones A and B. This is 2-oxoglutarate-dependent dioxygenase traH from Penicillium crustosum (Blue mold fungus).